A 554-amino-acid polypeptide reads, in one-letter code: Suppressor of hairless homolog (554 aa).

Residues 1-31 (MYHPHHLPAHGQVQSHQHREDAAATSSRDVN) form a disordered region. 3 consecutive DNA-binding regions follow at residues 83–90 (KSYGNEKR), 218–227 (RLRSQTVSTR), and 291–323 (RKVDKQTAILDADDPVSQLHKCAFYLKDTERMY). The IPT/TIG domain maps to 381–471 (PNVHSLQLNG…YPTNLTFTFT (91 aa)). Positions 489 to 554 (GSKRPSASMP…NGANMLRTAS (66 aa)) are disordered. Residues 508–519 (DSGRGNESDRGD) are compositionally biased toward basic and acidic residues.

This sequence belongs to the Su(H) family. In terms of assembly, interacts with activated Notch proteins.

Its subcellular location is the nucleus. In terms of biological role, transcriptional regulator that plays a central role in Notch signaling, a signaling pathway involved in cell-cell communication that regulates a broad spectrum of cell-fate determinations. Acts as a transcriptional repressor when it is not associated with Notch proteins. When associated with some Notch protein, it acts as a transcriptional activator that activates transcription of Notch target genes. Required for the transcriptional expression of Brachyury, suggesting that it participates in notochord differentiation. The sequence is that of Suppressor of hairless homolog (Su(H)) from Ciona intestinalis (Transparent sea squirt).